Reading from the N-terminus, the 480-residue chain is ATP synthase subunit beta, chloroplastic (480 aa).

ATP is bound at residue 161-168 (GGAGVGKT).

Belongs to the ATPase alpha/beta chains family. In terms of assembly, F-type ATPases have 2 components, CF(1) - the catalytic core - and CF(0) - the membrane proton channel. CF(1) has five subunits: alpha(3), beta(3), gamma(1), delta(1), epsilon(1). CF(0) has four main subunits: a(1), b(1), b'(1) and c(9-12).

The protein resides in the plastid. Its subcellular location is the chloroplast thylakoid membrane. The enzyme catalyses ATP + H2O + 4 H(+)(in) = ADP + phosphate + 5 H(+)(out). Its function is as follows. Produces ATP from ADP in the presence of a proton gradient across the membrane. The catalytic sites are hosted primarily by the beta subunits. The chain is ATP synthase subunit beta, chloroplastic from Tetradesmus obliquus (Green alga).